Consider the following 251-residue polypeptide: Hydroxyacylglutathione hydrolase (251 aa).

Zn(2+) is bound by residues histidine 53, histidine 55, aspartate 57, histidine 58, histidine 110, aspartate 127, and histidine 165.

Belongs to the metallo-beta-lactamase superfamily. Glyoxalase II family. Monomer. It depends on Zn(2+) as a cofactor.

The catalysed reaction is an S-(2-hydroxyacyl)glutathione + H2O = a 2-hydroxy carboxylate + glutathione + H(+). Its pathway is secondary metabolite metabolism; methylglyoxal degradation; (R)-lactate from methylglyoxal: step 2/2. Thiolesterase that catalyzes the hydrolysis of S-D-lactoyl-glutathione to form glutathione and D-lactic acid. The polypeptide is Hydroxyacylglutathione hydrolase (Shigella boydii serotype 18 (strain CDC 3083-94 / BS512)).